Consider the following 317-residue polypeptide: MNTWNELTVHVNREAEEAVSNLLIETGSQGVAISDSADYLGQEDRFGELYPEVEQSDMIAITAYYPDTLDIEVVKADLADRLANFEGFGLATGSVNLDSQELVEEDWADNWKKYYEPARITHDLTIVPSWTDYEAKAGEKIIKLDPGMAFGTGTHPTTKMSLFALEQVLRGGETVIDVGTGSGVLSIASSLLGAKDIYAFDLDVVAVRVAQENIDMNPGTDNIHVAAGDLLKGVQQEADVIVANILADILIHLTDDAYRLVKDEGYLIMSGIISEKWDMVRESAEKAGFFLETHMVQGEWNACVFKKTDDISGVIGG.

S-adenosyl-L-methionine contacts are provided by Thr158, Gly179, Asp201, and Asn244.

The protein belongs to the methyltransferase superfamily. PrmA family.

The protein resides in the cytoplasm. It catalyses the reaction L-lysyl-[protein] + 3 S-adenosyl-L-methionine = N(6),N(6),N(6)-trimethyl-L-lysyl-[protein] + 3 S-adenosyl-L-homocysteine + 3 H(+). Functionally, methylates ribosomal protein L11. In Streptococcus agalactiae serotype Ia (strain ATCC 27591 / A909 / CDC SS700), this protein is Ribosomal protein L11 methyltransferase.